An 83-amino-acid polypeptide reads, in one-letter code: Short neurotoxin NCA-02/NCA-05/UER-05 (83 aa).

Positions 1-21 are cleaved as a signal peptide; sequence MKTLLLTLVVVTMVCLDLGYT. Disulfide bonds link cysteine 24/cysteine 45, cysteine 38/cysteine 62, cysteine 64/cysteine 75, and cysteine 76/cysteine 81.

It belongs to the three-finger toxin family. Short-chain subfamily. Type I alpha-neurotoxin sub-subfamily. In terms of tissue distribution, expressed by the venom gland.

The protein resides in the secreted. Its function is as follows. Binds to muscle nicotinic acetylcholine receptor (nAChR) and inhibit acetylcholine from binding to the receptor, thereby impairing neuromuscular transmission. In Laticauda colubrina (Yellow-lipped sea krait), this protein is Short neurotoxin NCA-02/NCA-05/UER-05.